The following is a 398-amino-acid chain: Transcription termination factor 1, mitochondrial (398 aa).

A mitochondrion-targeting transit peptide spans 1 to 57 (MQSLSLGQTSISKGLNYLTIMAPGNLWHMRNNFLFGSRCWMTRFSAENIFKSVSFRL). Interaction with DNA stretches follow at residues 169-170 (RS), 246-250 (QSTKR), 323-330 (AEKKFNDK), 354-357 (SIST), and 383-390 (SKKRYEAK).

It belongs to the mTERF family. Monomer. In terms of processing, phosphoprotein with mostly four phosphate groups. While the DNA-binding activity is unaffected by the phosphorylation state, only the phosphorylated form of the protein is active for termination activity. Functioning seems to be regulated by phosphorylation.

The protein localises to the mitochondrion. Functionally, transcription termination factor. Binds to a 28 bp region within the tRNA(Leu(uur)) gene at a position immediately adjacent to and downstream of the 16S rRNA gene; this region comprises a tridecamer sequence critical for directing accurate termination. Binds DNA along the major grove and promotes DNA bending and partial unwinding. Promotes base flipping. Transcription termination activity appears to be polarized with highest specificity for transcripts initiated on the light strand. This is Transcription termination factor 1, mitochondrial (MTERF1) from Pongo abelii (Sumatran orangutan).